Here is a 538-residue protein sequence, read N- to C-terminus: MTAQNPSDQPSPTARELRLANHRLGAQNEKLTEALKASREKLAEINSRLADMAEPPSTYGTLLQLNGTGKTAEVFTSNRHMRLAVSPLLDRTDLQPGATVRLGENLQVVEVTGFADSGDVAAVVEVVGDRLIVADKLGEEAIVKAARPLQSLITNRELTTGDSVVVDRRSGWAFHMIPRAEVSSLVLEEVPDVSYENIGGLSNQIEQIRDAVELPFLHPEIYRHYGLRPPKGVLLYGPPGNGKTLIAKAVANSLSKSMGSSDKASRFADSYFLNVKGPELLNKFVGETERQIRQIFERARKIAHAGKPVIVFFDEMEAIFRTRGTGVSSDMESTVVPQLLSELDGVEGLDNVIVIGASNREELIDPAILRPGRLDVKIRVDRPDQEAALDILSKHIDASLPLAADLVAEHGGKEEAAAALCRAIAEELFRRDAAHRYVTLHLADGQTKDLYWADFVSGAMLANIVDRAKTFAIKRALSQAASTRDAAAEGGLNTADVLDAITAEINDSENLPDTTNPTEWARISGHATGRVVDITLAD.

Positions 14–54 (ARELRLANHRLGAQNEKLTEALKASREKLAEINSRLADMAE) form a coiled coil. Position 240-245 (240-245 (GNGKTL)) interacts with ATP.

This sequence belongs to the AAA ATPase family. As to quaternary structure, homohexamer. Assembles into a hexameric ring structure.

This chain is AAA ATPase forming ring-shaped complexes, found in Corynebacterium urealyticum (strain ATCC 43042 / DSM 7109).